Consider the following 367-residue polypeptide: Quinolinate synthase (367 aa).

Histidine 64 and serine 82 together coordinate iminosuccinate. [4Fe-4S] cluster is bound at residue cysteine 127. Iminosuccinate-binding positions include tyrosine 153–asparagine 155 and serine 170. Cysteine 216 contributes to the [4Fe-4S] cluster binding site. Iminosuccinate contacts are provided by residues histidine 242–glutamate 244 and threonine 259. Cysteine 302 serves as a coordination point for [4Fe-4S] cluster.

The protein belongs to the quinolinate synthase family. Type 2 subfamily. The cofactor is [4Fe-4S] cluster.

The protein localises to the cytoplasm. The enzyme catalyses iminosuccinate + dihydroxyacetone phosphate = quinolinate + phosphate + 2 H2O + H(+). It functions in the pathway cofactor biosynthesis; NAD(+) biosynthesis; quinolinate from iminoaspartate: step 1/1. Catalyzes the condensation of iminoaspartate with dihydroxyacetone phosphate to form quinolinate. This Caulobacter vibrioides (strain ATCC 19089 / CIP 103742 / CB 15) (Caulobacter crescentus) protein is Quinolinate synthase.